The sequence spans 235 residues: 5'-methylthioadenosine/S-adenosylhomocysteine nucleosidase (235 aa).

The active-site Proton acceptor is Glu12. Substrate contacts are provided by residues Gly78, Ile152, and 173–174 (ME). The active-site Proton donor is the Asp197.

It belongs to the PNP/UDP phosphorylase family. MtnN subfamily. Homodimer.

The catalysed reaction is S-adenosyl-L-homocysteine + H2O = S-(5-deoxy-D-ribos-5-yl)-L-homocysteine + adenine. It carries out the reaction S-methyl-5'-thioadenosine + H2O = 5-(methylsulfanyl)-D-ribose + adenine. The enzyme catalyses 5'-deoxyadenosine + H2O = 5-deoxy-D-ribose + adenine. It functions in the pathway amino-acid biosynthesis; L-methionine biosynthesis via salvage pathway; S-methyl-5-thio-alpha-D-ribose 1-phosphate from S-methyl-5'-thioadenosine (hydrolase route): step 1/2. In terms of biological role, catalyzes the irreversible cleavage of the glycosidic bond in both 5'-methylthioadenosine (MTA) and S-adenosylhomocysteine (SAH/AdoHcy) to adenine and the corresponding thioribose, 5'-methylthioribose and S-ribosylhomocysteine, respectively. Also cleaves 5'-deoxyadenosine, a toxic by-product of radical S-adenosylmethionine (SAM) enzymes, into 5-deoxyribose and adenine. Thus, is required for in vivo function of the radical SAM enzymes biotin synthase and lipoic acid synthase, that are inhibited by 5'-deoxyadenosine accumulation. The chain is 5'-methylthioadenosine/S-adenosylhomocysteine nucleosidase from Proteus mirabilis (strain HI4320).